Here is a 21-residue protein sequence, read N- to C-terminus: Venom nerve growth factor Bco12 (21 aa).

Belongs to the NGF-beta family. Homodimer; non-covalently linked. In terms of processing, glycosylated. In terms of tissue distribution, expressed by the venom gland.

It is found in the secreted. Functionally, nerve growth factor is important for the development and maintenance of the sympathetic and sensory nervous systems. It stimulates division and differentiation of sympathetic and embryonic sensory neurons as well as basal forebrain cholinergic neurons in the brain. Its relevance in the snake venom is not clear. However, it has been shown to inhibit metalloproteinase-dependent proteolysis of platelet glycoprotein Ib alpha, suggesting a metalloproteinase inhibition to prevent metalloprotease autodigestion and/or protection against prey proteases. Binds a lipid between the two protein chains in the homodimer. The lipid-bound form promotes histamine relase from mouse mast cells, contrary to the lipid-free form. In Bothrops cotiara (Cotiara), this protein is Venom nerve growth factor Bco12.